Here is a 446-residue protein sequence, read N- to C-terminus: Thymidine phosphorylase (446 aa).

This sequence belongs to the thymidine/pyrimidine-nucleoside phosphorylase family. As to quaternary structure, homodimer.

The enzyme catalyses thymidine + phosphate = 2-deoxy-alpha-D-ribose 1-phosphate + thymine. The protein operates within pyrimidine metabolism; dTMP biosynthesis via salvage pathway; dTMP from thymine: step 1/2. The enzymes which catalyze the reversible phosphorolysis of pyrimidine nucleosides are involved in the degradation of these compounds and in their utilization as carbon and energy sources, or in the rescue of pyrimidine bases for nucleotide synthesis. The sequence is that of Thymidine phosphorylase from Idiomarina loihiensis (strain ATCC BAA-735 / DSM 15497 / L2-TR).